The chain runs to 244 residues: VEQTERSRKLAEQELIETSERVQLLHSQNTSLINQKKKMDADLSQLQTEVEEAVQECRNAEEKAKKAITDAAMMAEELKKEQDTSAHLERMKKNMEQTIKDLQHRLDEAEQIALKGGKKQLQKLEARVRELENELEAEQKRNAESVKGMRKSERRIKELTYQTEEDRKNLLRLQDLVDKLQLKVKAYKRQAEEAEEQANTNLSKFRKVQHELDEAEERADIAESQVNKLRAKSRDIGTKGLNEE.

A rodlike tail (S2 and LMM domains) region spans residues 1 to 244 (VEQTERSRKL…DIGTKGLNEE (244 aa)). A coiled-coil region spans residues 1-244 (VEQTERSRKL…DIGTKGLNEE (244 aa)). A disordered region spans residues 216 to 244 (EERADIAESQVNKLRAKSRDIGTKGLNEE). A compositionally biased stretch (basic and acidic residues) spans 232 to 244 (KSRDIGTKGLNEE).

As to quaternary structure, muscle myosin is a hexameric protein that consists of 2 heavy chain subunits (MHC), 2 alkali light chain subunits (MLC) and 2 regulatory light chain subunits (MLC-2). Interacts with ECPAS. Interacts (via C-terminus) with LRRC39.

It localises to the cytoplasm. The protein resides in the myofibril. The protein localises to the sarcomere. Its function is as follows. Myosins are actin-based motor molecules with ATPase activity essential for muscle contraction. Forms regular bipolar thick filaments that, together with actin thin filaments, constitute the fundamental contractile unit of skeletal and cardiac muscle. This chain is Myosin-7 (MYH7), found in Papio hamadryas (Hamadryas baboon).